We begin with the raw amino-acid sequence, 445 residues long: GRAM domain-containing protein 2B (445 aa).

Methionine 1 carries the N-acetylmethionine modification. Residues 1 to 10 (MVKKPISSSD) are compositionally biased toward polar residues. Residues 1 to 119 (MVKKPISSSD…RKKSSSSSQY (119 aa)) form a disordered region. Over residues 18–37 (PSSPKSSAGASHSSTDSPSS) the composition is skewed to low complexity. Polar residues-rich tracts occupy residues 56 to 68 (KSPT…SSVE) and 82 to 93 (SKSSFDGSNLLS). Residues 94–112 (DKNDCKTESKADSKTERKK) are compositionally biased toward basic and acidic residues. The GRAM domain maps to 123 to 190 (MHFHKLFLDV…FSVTLIKKTK (68 aa)). Serine 238, serine 255, and serine 265 each carry phosphoserine. Residues 277–331 (DLEGYSSSGSQTPESENSRDFHVTESQTVLNVTKGETKPPRTDAHGSRAPDGKAK) are disordered. A compositionally biased stretch (polar residues) spans 281–291 (YSSSGSQTPES). The segment covering 311–330 (GETKPPRTDAHGSRAPDGKA) has biased composition (basic and acidic residues).

In Rattus norvegicus (Rat), this protein is GRAM domain-containing protein 2B (Gramd2b).